Reading from the N-terminus, the 344-residue chain is MEQQKKNIKRYTEEEIEKAASLDIVDYCMQNDIPVKPDSERYYRLTEHDSLIIDRKKNQFYWNSRGVNGNIIKFVQEVEDASFPGAMQRLLDGEQDYEKASEITFVSEPYDYEHFEQKEVSRFDRAREYLIEERKIDPQVVDALHNKGLIKQDKYNNVLFLWKDRETGAVMGGSEQGVVKSDKYKRGAWKSIQKNSTANYGFNVLNGEPRNLKFYESDIDLLSYATLHKHNLKDTHLISMEGLKPQVIFNYYMKACERIGDVPDSLSLCVDNDKAGKAFVERLIHFRYEKNDGSIVAFKPEYPQAPSEEKKWDWNDECKRVAKQQEQREQGRRAAYLQQRGMER.

Positions 323–332 are enriched in basic and acidic residues; sequence KQQEQREQGR. Positions 323-344 are disordered; the sequence is KQQEQREQGRRAAYLQQRGMER.

This is an uncharacterized protein from Bacillus anthracis.